A 562-amino-acid chain; its full sequence is Adenylate kinase isoenzyme 5 (562 aa).

Adenylate kinase stretches follow at residues 133–316 and 377–559; these read KIIL…MAVD and KIIF…TAID. Residue 142–147 participates in ATP binding; the sequence is GSGKGT. The interval 162–193 is NMP 1; the sequence is SVGELLRKKIHSTSSNRKWSLIAKIITTGELA. Residues Arg168, 191–193, 219–222, and Gln226 each bind AMP; these read ELA and GFPR. The tract at residues 256 to 266 is LID 1; that stretch reads KRAEQQGRPDD. Arg257 provides a ligand contact to ATP. Residues Arg263 and Arg274 each coordinate AMP. 386–391 is an ATP binding site; it reads GSGKGT. The tract at residues 406–435 is NMP 2; the sequence is STDELLQNELSSESGRSKLIRDIMERGELV. AMP contacts are provided by residues Thr407, 433–435, 462–465, and Gln469; these read ELV and GYPR. Residues 499–509 are LID 2; the sequence is QRSRNSPQADD. ATP is bound at residue Arg500. Arg517 is an AMP binding site. Gly545 contributes to the ATP binding site.

This sequence belongs to the adenylate kinase family. In terms of assembly, monomer.

It localises to the cytoplasm. It catalyses the reaction AMP + ATP = 2 ADP. It carries out the reaction a 2'-deoxyribonucleoside 5'-diphosphate + ATP = a 2'-deoxyribonucleoside 5'-triphosphate + ADP. The enzyme catalyses a ribonucleoside 5'-diphosphate + ATP = a ribonucleoside 5'-triphosphate + ADP. Functionally, nucleoside monophosphate (NMP) kinase that catalyzes the reversible transfer of the terminal phosphate group between nucleoside triphosphates and monophosphates. Active on AMP and dAMP with ATP as a donor. When GTP is used as phosphate donor, the enzyme phosphorylates AMP, CMP, and to a small extent dCMP. Also displays broad nucleoside diphosphate kinase activity. The sequence is that of Adenylate kinase isoenzyme 5 (Ak5) from Bos taurus (Bovine).